Consider the following 123-residue polypeptide: Small ribosomal subunit protein uS12 (123 aa).

A 3-methylthioaspartic acid modification is found at aspartate 89.

It belongs to the universal ribosomal protein uS12 family. Part of the 30S ribosomal subunit. Contacts proteins S8 and S17. May interact with IF1 in the 30S initiation complex.

Its function is as follows. With S4 and S5 plays an important role in translational accuracy. Functionally, interacts with and stabilizes bases of the 16S rRNA that are involved in tRNA selection in the A site and with the mRNA backbone. Located at the interface of the 30S and 50S subunits, it traverses the body of the 30S subunit contacting proteins on the other side and probably holding the rRNA structure together. The combined cluster of proteins S8, S12 and S17 appears to hold together the shoulder and platform of the 30S subunit. This is Small ribosomal subunit protein uS12 from Rhodopseudomonas palustris (strain BisA53).